Here is a 103-residue protein sequence, read N- to C-terminus: Small ribosomal subunit protein uS10 (103 aa).

This sequence belongs to the universal ribosomal protein uS10 family. In terms of assembly, part of the 30S ribosomal subunit.

Involved in the binding of tRNA to the ribosomes. The polypeptide is Small ribosomal subunit protein uS10 (Xanthomonas campestris pv. campestris (strain B100)).